Reading from the N-terminus, the 128-residue chain is Flagellar basal body rod protein FlgB (128 aa).

This sequence belongs to the flagella basal body rod proteins family. The basal body constitutes a major portion of the flagellar organelle and consists of a number of rings mounted on a central rod. In Gram-negative bacteria, at least four rings, L, P, S and M are present, whereas Gram-positive bacteria lack the L and P rings. The rod consists of about 26 subunits of FlgG in the distal portion, and FlgB, FlgC and FlgF build up the proximal portion of the rod with about 6 subunits each. Rod assembly occurs by export via the flagellum-specific pathway of its constituent proteins and by their incorporation into the rod structure in the probable order of FlgB, FlgC, FlgF and FlgG. Another protein, FliE, also assembles onto the stable rod structure.

It is found in the bacterial flagellum basal body. Its function is as follows. Structural component of flagellum, the bacterial motility apparatus. Part of the rod structure of flagellar basal body. This is Flagellar basal body rod protein FlgB from Cereibacter sphaeroides (Rhodobacter sphaeroides).